Here is a 206-residue protein sequence, read N- to C-terminus: Probable GTP-binding protein EngB (206 aa).

The EngB-type G domain maps to 23–195 (DLLEIAFVGR…WARIEAIMAE (173 aa)). GTP is bound by residues 31-38 (GRSNVGKS), 58-62 (GRTQL), 76-79 (DLPG), 143-146 (TKCD), and 174-176 (FSA). Residues Ser-38 and Thr-60 each contribute to the Mg(2+) site.

Belongs to the TRAFAC class TrmE-Era-EngA-EngB-Septin-like GTPase superfamily. EngB GTPase family. Mg(2+) serves as cofactor.

Necessary for normal cell division and for the maintenance of normal septation. This Geobacter sulfurreducens (strain ATCC 51573 / DSM 12127 / PCA) protein is Probable GTP-binding protein EngB.